The following is an 850-amino-acid chain: MAMISFSFPSPAKLPIKSQPSVSNRINVADRLILRHLNAGDLRGAVSALDLMARDGIRPMDSVTFSSLLKSCIRARDFRLGKLVHARLIEFDIEPDSVLYNSLISLYSKSGDSAKAEDVFETMRRFGKRDVVSWSAMMACYGNNGRELDAIKVFVEFLELGLVPNDYCYTAVIRACSNSDFVGVGRVTLGFLMKTGHFESDVCVGCSLIDMFVKGENSFENAYKVFDKMSELNVVTWTLMITRCMQMGFPREAIRFFLDMVLSGFESDKFTLSSVFSACAELENLSLGKQLHSWAIRSGLVDDVECSLVDMYAKCSADGSVDDCRKVFDRMEDHSVMSWTALITGYMKNCNLATEAINLFSEMITQGHVEPNHFTFSSAFKACGNLSDPRVGKQVLGQAFKRGLASNSSVANSVISMFVKSDRMEDAQRAFESLSEKNLVSYNTFLDGTCRNLNFEQAFKLLSEITERELGVSAFTFASLLSGVANVGSIRKGEQIHSQVVKLGLSCNQPVCNALISMYSKCGSIDTASRVFNFMENRNVISWTSMITGFAKHGFAIRVLETFNQMIEEGVKPNEVTYVAILSACSHVGLVSEGWRHFNSMYEDHKIKPKMEHYACMVDLLCRAGLLTDAFEFINTMPFQADVLVWRTFLGACRVHSNTELGKLAARKILELDPNEPAAYIQLSNIYACAGKWEESTEMRRKMKERNLVKEGGCSWIEVGDKIHKFYVGDTAHPNAHQIYDELDRLITEIKRCGYVPDTDLVLHKLEEENDEAEKERLLYQHSEKIAVAFGLISTSKSRPVRVFKNLRVCGDCHNAMKYISTVSGREIVLRDLNRFHHFKDGKCSCNDYW.

The N-terminal 50 residues, 1–50 (MAMISFSFPSPAKLPIKSQPSVSNRINVADRLILRHLNAGDLRGAVSALD), are a transit peptide targeting the chloroplast. PPR repeat units follow at residues 61 to 95 (DSVTFSSLLKSCIRARDFRLGKLVHARLIEFDIEP), 96 to 130 (DSVLYNSLISLYSKSGDSAKAEDVFETMRRFGKRD), 131 to 164 (VVSWSAMMACYGNNGRELDAIKVFVEFLELGLVP), 165 to 199 (NDYCYTAVIRACSNSDFVGVGRVTLGFLMKTGHFE), 201 to 232 (DVCVGCSLIDMFVKGENSFENAYKVFDKMSEL), 233 to 267 (NVVTWTLMITRCMQMGFPREAIRFFLDMVLSGFES), 268 to 302 (DKFTLSSVFSACAELENLSLGKQLHSWAIRSGLVD), 303 to 334 (DVECSLVDMYAKCSADGSVDDCRKVFDRMEDH), 335 to 370 (SVMSWTALITGYMKNCNLATEAINLFSEMITQGHVE), 372 to 406 (NHFTFSSAFKACGNLSDPRVGKQVLGQAFKRGLAS), 407 to 437 (NSSVANSVISMFVKSDRMEDAQRAFESLSEK), 438 to 472 (NLVSYNTFLDGTCRNLNFEQAFKLLSEITERELGV), 473 to 507 (SAFTFASLLSGVANVGSIRKGEQIHSQVVKLGLSC), 508 to 538 (NQPVCNALISMYSKCGSIDTASRVFNFMENR), 539 to 573 (NVISWTSMITGFAKHGFAIRVLETFNQMIEEGVKP), 574 to 609 (NEVTYVAILSACSHVGLVSEGWRHFNSMYEDHKIKP), and 610 to 640 (KMEHYACMVDLLCRAGLLTDAFEFINTMPFQ). Positions 645–720 (VWRTFLGACR…EGGCSWIEVG (76 aa)) are type E motif. Positions 721 to 751 (DKIHKFYVGDTAHPNAHQIYDELDRLITEIK) are type E(+) motif. The type DYW motif stretch occupies residues 752–850 (RCGYVPDTDL…DGKCSCNDYW (99 aa)).

The protein belongs to the PPR family. PCMP-H subfamily.

The protein resides in the plastid. Its subcellular location is the chloroplast. May play a role in embryogenesis. The sequence is that of Pentatricopeptide repeat-containing protein At3g49170, chloroplastic (EMB2261) from Arabidopsis thaliana (Mouse-ear cress).